Here is a 210-residue protein sequence, read N- to C-terminus: Synaptosomal-associated protein 23 (210 aa).

Position 1 is an N-acetylmethionine (methionine 1). A phosphoserine mark is found at serine 5, serine 20, serine 23, and serine 34. In terms of domain architecture, t-SNARE coiled-coil homology 1 spans 14 to 76; the sequence is HQVTDESLES…REAEKTLTEL (63 aa). Residues 23-76 adopt a coiled-coil conformation; sequence STRRILGLAIESQDAGIKTITMLDEQGEQLNRIEEGMDQINKDMREAEKTLTEL. S-palmitoyl cysteine attachment occurs at residues cysteine 79, cysteine 80, cysteine 83, cysteine 85, and cysteine 87. Residues 104–136 form a disordered region; the sequence is GDGGDSSPSNVVSKQPSRITNGQPQQTTGAASG. Polar residues predominate over residues 109–133; sequence SSPSNVVSKQPSRITNGQPQQTTGA. Phosphoserine occurs at positions 110 and 160. The t-SNARE coiled-coil homology 2 domain maps to 145–207; the sequence is DAREDEMEEN…DIANTRAKKL (63 aa).

It belongs to the SNAP-25 family. As to quaternary structure, homotetramer (via coiled-coil domain), also forms heterotetramers with STX4 and VAMP3. Found in a complex with VAMP8 and STX1A. Found in a complex with VAMP8 and STX4 in pancreas. Interacts simultaneously with SNAPIN and SYN4. Interacts with STX1A. Interacts with STX12. Interacts tightly to multiple syntaxins and synaptobrevins/VAMPs. Interacts with ZDHHC13 (via ANK repeats). Interacts with ZDHHC17 (via ANK repeats).

The protein localises to the cell membrane. It localises to the synapse. It is found in the synaptosome. The protein resides in the cytoplasmic vesicle membrane. Its function is as follows. Essential component of the high affinity receptor for the general membrane fusion machinery and an important regulator of transport vesicle docking and fusion. This is Synaptosomal-associated protein 23 (Snap23) from Rattus norvegicus (Rat).